A 102-amino-acid chain; its full sequence is MLKIKRDDEIIVIAGKDKGKRGSVQQVLDNGRLIVAGVNMVKKHVKANPNRGTQGGIVEQEASLNASNVAIWNPKTQKADRVGFRFEDGKKVRFFKSNGEAL.

It belongs to the universal ribosomal protein uL24 family. As to quaternary structure, part of the 50S ribosomal subunit.

Functionally, one of two assembly initiator proteins, it binds directly to the 5'-end of the 23S rRNA, where it nucleates assembly of the 50S subunit. In terms of biological role, one of the proteins that surrounds the polypeptide exit tunnel on the outside of the subunit. This is Large ribosomal subunit protein uL24 from Alcanivorax borkumensis (strain ATCC 700651 / DSM 11573 / NCIMB 13689 / SK2).